A 613-amino-acid polypeptide reads, in one-letter code: Dihydroxy-acid dehydratase (613 aa).

Asp81 provides a ligand contact to Mg(2+). Residue Cys122 coordinates [2Fe-2S] cluster. Mg(2+) is bound by residues Asp123 and Lys124. An N6-carboxylysine modification is found at Lys124. Position 193 (Cys193) interacts with [2Fe-2S] cluster. Mg(2+) is bound at residue Glu489. The active-site Proton acceptor is Ser515.

Belongs to the IlvD/Edd family. In terms of assembly, homodimer. The cofactor is [2Fe-2S] cluster. Mg(2+) serves as cofactor.

The enzyme catalyses (2R)-2,3-dihydroxy-3-methylbutanoate = 3-methyl-2-oxobutanoate + H2O. It carries out the reaction (2R,3R)-2,3-dihydroxy-3-methylpentanoate = (S)-3-methyl-2-oxopentanoate + H2O. Its pathway is amino-acid biosynthesis; L-isoleucine biosynthesis; L-isoleucine from 2-oxobutanoate: step 3/4. It functions in the pathway amino-acid biosynthesis; L-valine biosynthesis; L-valine from pyruvate: step 3/4. In terms of biological role, functions in the biosynthesis of branched-chain amino acids. Catalyzes the dehydration of (2R,3R)-2,3-dihydroxy-3-methylpentanoate (2,3-dihydroxy-3-methylvalerate) into 2-oxo-3-methylpentanoate (2-oxo-3-methylvalerate) and of (2R)-2,3-dihydroxy-3-methylbutanoate (2,3-dihydroxyisovalerate) into 2-oxo-3-methylbutanoate (2-oxoisovalerate), the penultimate precursor to L-isoleucine and L-valine, respectively. This Pseudomonas fluorescens (strain ATCC BAA-477 / NRRL B-23932 / Pf-5) protein is Dihydroxy-acid dehydratase.